The sequence spans 65 residues: Conotoxin Lp5.1 (65 aa).

An N-terminal signal peptide occupies residues 1–22 (MRCVPVFIILLLLIPSAPSVDA). Positions 23–50 (QRKTKDDVPLASFHDNAKRTLKRLWNKR) are excised as a propeptide.

It belongs to the conotoxin T superfamily. Contains 2 disulfide bonds that can be either 'C1-C3, C2-C4' or 'C1-C4, C2-C3', since these disulfide connectivities have been observed for conotoxins with cysteine framework V (for examples, see AC P0DQQ7 and AC P81755). Expressed by the venom duct.

The protein resides in the secreted. This chain is Conotoxin Lp5.1, found in Conus leopardus (Leopard cone).